Reading from the N-terminus, the 271-residue chain is MSKLVWLDAGHGGKDSGAAANGIKEKDIVLKIVKKVKSILTSRYEVAVKLTRDSDVFYELIDRARKANAAKADLFVSVHINATPGGKGFETYRYVKTSASSSTGQQQKVLHDAIYKRIKKYGIKDRGEKAADLSVLRNTSMPAVLTENLFIDNKDEAALLKKDSFLNDVAEGHAEGIAEILNLKKKSGGSAPKKEDKPSSGKTKMVIVKDNPDGFLWVYNKADWNARYKKVKPDEAFTIDKTVTVNGSKMYKLKSGLYITAASKYVTVKEK.

Residues 5-178 (VWLDAGHGGK…VAEGHAEGIA (174 aa)) form the MurNAc-LAA domain.

It localises to the host cytoplasm. Functionally, endolysin that degrades host peptidoglycans and participates with the holin protein(s) in the sequential events which lead to the programmed host cell lysis releasing the mature viral particles. Once the holin(s) has permeabilized the host cell membrane, the endolysin can reach the periplasm and break down the peptidoglycan layer. The protein is Endolysin (25) of Bacillus phage SPP1 (Bacteriophage SPP1).